The sequence spans 197 residues: Elongation factor Ts (197 aa).

The involved in Mg(2+) ion dislocation from EF-Tu stretch occupies residues 81 to 84 (TDFV).

It belongs to the EF-Ts family.

It localises to the cytoplasm. Functionally, associates with the EF-Tu.GDP complex and induces the exchange of GDP to GTP. It remains bound to the aminoacyl-tRNA.EF-Tu.GTP complex up to the GTP hydrolysis stage on the ribosome. This is Elongation factor Ts from Coprothermobacter proteolyticus (strain ATCC 35245 / DSM 5265 / OCM 4 / BT).